The chain runs to 193 residues: Riboflavin kinase (193 aa).

The segment at 1-59 (MGISQQAASQHLRELEDEGLITRNAEGKGISVMVTDKGRHELLRVYNILHDSLHSRPDH) is H-T-H motif-like. The tract at residues 60-193 (VEITGTLVSG…TIRIPLEQED (134 aa)) is riboflavin kinase. 69-74 (GMNEGA) provides a ligand contact to CDP. Mg(2+)-binding residues include Thr-98 and Asn-100. 2 residues coordinate FMN: Thr-156 and Glu-164. Position 169–172 (169–172 (LDIR)) interacts with CDP.

It belongs to the archaeal riboflavin kinase family. The cofactor is Mg(2+).

It catalyses the reaction riboflavin + CTP = CDP + FMN + H(+). It functions in the pathway cofactor biosynthesis; FMN biosynthesis; FMN from riboflavin (CTP route): step 1/1. Catalyzes the CTP-dependent phosphorylation of riboflavin (vitamin B2) to form flavin mononucleotide (FMN). The sequence is that of Riboflavin kinase (ribK) from Cenarchaeum symbiosum (strain A).